Here is a 61-residue protein sequence, read N- to C-terminus: Large ribosomal subunit protein bL32 (61 aa).

A compositionally biased stretch (basic residues) spans 1-16 (MAVPKRKTSPSRRGMR). The disordered stretch occupies residues 1–44 (MAVPKRKTSPSRRGMRRSADALKAPTYVEDKDSGELRRPHHIDL). Over residues 28–44 (VEDKDSGELRRPHHIDL) the composition is skewed to basic and acidic residues.

This sequence belongs to the bacterial ribosomal protein bL32 family.

The sequence is that of Large ribosomal subunit protein bL32 from Methylobacterium nodulans (strain LMG 21967 / CNCM I-2342 / ORS 2060).